Here is a 710-residue protein sequence, read N- to C-terminus: Secretin OutD (710 aa).

Residues 1–27 (MLGKGIKKSWGWLGLTVLLLGSPCGWA) form the signal peptide. The interval 28–105 (AEFSASFKGT…DNGVLKVIRS (78 aa)) is N0. Residues 123–190 (IGDELVTRVV…DIVNTVDKTG (68 aa)) form an N1 region. The N2 stretch occupies residues 192 to 262 (REMVTVPLTY…VEMIRQLDRK (71 aa)). Positions 288–399 (GNGTSGNRNS…INQLDIRRPQ (112 aa)) are N3. A disordered region spans residues 289-353 (NGTSGNRNSS…AFGSTSSSGG (65 aa)). Residues 401 to 648 (LVEAIIAEIQ…MLFLRPTIIR (248 aa)) form a secretin region. The tract at residues 691–710 (TYTFRQVQSSISDFYKPEGR) is s domain.

Belongs to the bacterial secretin family. GSP D subfamily. As to quaternary structure, forms a cylindrical channel with 15 subunits. Interacts with pilotin OutS.

The protein resides in the cell outer membrane. Functionally, involved in a type II secretion system (T2SS, formerly general secretion pathway, GSP) for the export of proteins. Required for the translocation of the multiple pectic enzymes. This subunit forms the outer membrane channel. This chain is Secretin OutD (outD), found in Dickeya dadantii (strain 3937) (Erwinia chrysanthemi (strain 3937)).